The sequence spans 736 residues: Phosphoribosylformylglycinamidine synthase subunit PurL (736 aa).

The active site involves His48. Residues Tyr51 and Lys90 each coordinate ATP. Glu92 is a binding site for Mg(2+). Residues 93–96 and Arg115 contribute to the substrate site; that span reads SHNH. The active-site Proton acceptor is His94. Asp116 serves as a coordination point for Mg(2+). Substrate is bound at residue Gln239. Asp267 contributes to the Mg(2+) binding site. Residue 311 to 313 coordinates substrate; it reads ESQ. 2 residues coordinate ATP: Asp492 and Gly529. Mg(2+) is bound at residue Asn530. Ser532 is a binding site for substrate.

This sequence belongs to the FGAMS family. Monomer. Part of the FGAM synthase complex composed of 1 PurL, 1 PurQ and 2 PurS subunits.

The protein resides in the cytoplasm. It catalyses the reaction N(2)-formyl-N(1)-(5-phospho-beta-D-ribosyl)glycinamide + L-glutamine + ATP + H2O = 2-formamido-N(1)-(5-O-phospho-beta-D-ribosyl)acetamidine + L-glutamate + ADP + phosphate + H(+). Its pathway is purine metabolism; IMP biosynthesis via de novo pathway; 5-amino-1-(5-phospho-D-ribosyl)imidazole from N(2)-formyl-N(1)-(5-phospho-D-ribosyl)glycinamide: step 1/2. Part of the phosphoribosylformylglycinamidine synthase complex involved in the purines biosynthetic pathway. Catalyzes the ATP-dependent conversion of formylglycinamide ribonucleotide (FGAR) and glutamine to yield formylglycinamidine ribonucleotide (FGAM) and glutamate. The FGAM synthase complex is composed of three subunits. PurQ produces an ammonia molecule by converting glutamine to glutamate. PurL transfers the ammonia molecule to FGAR to form FGAM in an ATP-dependent manner. PurS interacts with PurQ and PurL and is thought to assist in the transfer of the ammonia molecule from PurQ to PurL. This chain is Phosphoribosylformylglycinamidine synthase subunit PurL, found in Bradyrhizobium diazoefficiens (strain JCM 10833 / BCRC 13528 / IAM 13628 / NBRC 14792 / USDA 110).